The sequence spans 281 residues: MRIAVPNKGRLHEPALELLERAGLHVQDGSDRKLYADTVDPEVSVLFARAADIPEYVADGAAALGITGLDQERESETDLVDLLDLEFGSCRLVLASPEDGGVSAPEELSGGTVATEFPKITERYFEELGVRPDIVEVSGATELTPHVDIADAIVDITSTGTTLRMNRLEVVDEVLESSVRLFADPAVADDPKVEQVTTAFRSVLDADGKRYLMMNVPEDSLDAVEAEIPGMGGPTVMDVAGQDTVAVHVVVDEREVFEVIPKLKAAGATDILVTEIERLVP.

The protein belongs to the ATP phosphoribosyltransferase family. Long subfamily. It depends on Mg(2+) as a cofactor.

Its subcellular location is the cytoplasm. The enzyme catalyses 1-(5-phospho-beta-D-ribosyl)-ATP + diphosphate = 5-phospho-alpha-D-ribose 1-diphosphate + ATP. It functions in the pathway amino-acid biosynthesis; L-histidine biosynthesis; L-histidine from 5-phospho-alpha-D-ribose 1-diphosphate: step 1/9. Its activity is regulated as follows. Feedback inhibited by histidine. Its function is as follows. Catalyzes the condensation of ATP and 5-phosphoribose 1-diphosphate to form N'-(5'-phosphoribosyl)-ATP (PR-ATP). Has a crucial role in the pathway because the rate of histidine biosynthesis seems to be controlled primarily by regulation of HisG enzymatic activity. In Natronomonas pharaonis (strain ATCC 35678 / DSM 2160 / CIP 103997 / JCM 8858 / NBRC 14720 / NCIMB 2260 / Gabara) (Halobacterium pharaonis), this protein is ATP phosphoribosyltransferase.